Consider the following 160-residue polypeptide: uncharacterized protein (160 aa).

A compositionally biased stretch (basic and acidic residues) spans Met1–Asp31. The disordered stretch occupies residues Met1–Glu160. The stretch at Lys20–Lys111 forms a coiled coil. Over residues Lys32–Lys42 the composition is skewed to basic residues. The span at Asp43 to Glu160 shows a compositional bias: basic and acidic residues.

This is an uncharacterized protein from Dictyostelium discoideum (Social amoeba).